The following is a 1820-amino-acid chain: Histone-lysine N-methyltransferase, H3 lysine-9 specific (1820 aa).

Disordered regions lie at residues 1-54 (MPGA…TSMR), 74-251 (NLLP…TPVT), 284-618 (SLSD…APTK), 634-681 (SSER…KKAV), 804-836 (NVDDQDSAQPQNQTPLPSAISVSSKKNHGSLSK), 850-893 (SSTL…VNSW), 911-944 (HAKKKWKERERGKEREKEKVREKEKAEEENEQLR), 966-996 (DVESRTRSIPRADGETRKRPPSPGISVSTDA), 1063-1126 (PLSV…NGAV), 1183-1270 (RYAV…DRTA), 1296-1335 (KASAVSPVPSANRPSPAPSAKADLLPQKRKRRLKKITSQQ), and 1385-1407 (RSEPRTKREPIEEDNNEYFTDSD). The segment covering 11–31 (VDNPLVLDSSDSDDNLSGLPL) has biased composition (low complexity). Over residues 109 to 129 (ADSSSPPENQNVISFLGNHSQ) the composition is skewed to polar residues. Residues 152–169 (GGENIAGQNNEANAAQAA) are compositionally biased toward low complexity. Composition is skewed to polar residues over residues 174–204 (GTPSLTLSSNRPQSVSGAQLVVASSSRSAIN) and 212–222 (SIPQQSPSSRA). Low complexity-rich tracts occupy residues 226–236 (RSASIASSRSR), 284–311 (SLSDPTILSPPSATSAPPNSPIPSTSTT), and 339–352 (TPATTSPAGPGPSA). A compositionally biased stretch (basic and acidic residues) spans 361 to 370 (KSSDQKESPR). Polar residues predominate over residues 374–385 (SKQPSSPSSTHG). Low complexity predominate over residues 400 to 424 (SATSGKSSAASSRSKSRAPLSSRAA). Positions 433–442 (SKTTSVSSTH) are enriched in polar residues. The span at 443-459 (PPSRASPSSLPSQSQRQ) shows a compositional bias: low complexity. A compositionally biased stretch (polar residues) spans 479 to 510 (TLSSGTGQSTPSKFSLPTSDVASNQKNKSTGL). 3 stretches are compositionally biased toward low complexity: residues 514 to 531 (PKKPSSTPTSSIPQRTST), 551 to 563 (QSSSEASRSIQTS), and 594 to 618 (TKATTLFHTTSSPPSPSQSTSAPTK). 2 stretches are compositionally biased toward polar residues: residues 643-662 (GKSQTSDSVVAPAASQTAAS) and 810-827 (SAQPQNQTPLPSAISVSS). Residues 850–861 (SSTLGDSVSGLG) show a composition bias toward low complexity. Residues 869-893 (TQSMPQSPLPTTNTNNSSGIEVNSW) show a composition bias toward polar residues. 2 stretches are compositionally biased toward basic and acidic residues: residues 917–944 (KERERGKEREKEKVREKEKAEEENEQLR) and 966–983 (DVESRTRSIPRADGETRK). A compositionally biased stretch (low complexity) spans 1076–1089 (SSSSTSTPSLLSRS). Residues 1296 to 1320 (KASAVSPVPSANRPSPAPSAKADLL) are compositionally biased toward low complexity. The Pre-SET domain occupies 1516 to 1585 (LGCDCDGPCD…ECMNRVIQRG (70 aa)). Zn(2+) is bound by residues Cys1518, Cys1520, Cys1524, Cys1531, Cys1533, Cys1567, Cys1571, Cys1573, and Cys1577. The SET domain occupies 1590–1750 (TGIEIFKTKE…KHEELCISYK (161 aa)). S-adenosyl-L-methionine-binding positions include 1600 to 1602 (KGW), Tyr1643, Arg1704, and 1707 to 1708 (NH). Residue Cys1710 participates in Zn(2+) binding. The tract at residues 1756-1794 (DDIPSPEPVKKKKGGKGKKQMSKTSASAHPPEMTALNSD) is disordered. Over residues 1765–1776 (KKKKGGKGKKQM) the composition is skewed to basic residues. Residues 1800-1816 (VKDICRCGAKNCDGRMF) enclose the Post-SET domain. Cys1804, Cys1806, and Cys1811 together coordinate Zn(2+).

It belongs to the class V-like SAM-binding methyltransferase superfamily. Histone-lysine methyltransferase family. Suvar3-9 subfamily.

The protein resides in the nucleus. It localises to the chromosome. It catalyses the reaction N(6)-methyl-L-lysyl(9)-[histone H3] + S-adenosyl-L-methionine = N(6),N(6)-dimethyl-L-lysyl(9)-[histone H3] + S-adenosyl-L-homocysteine + H(+). The enzyme catalyses L-lysyl(9)-[histone H3] + S-adenosyl-L-methionine = N(6)-methyl-L-lysyl(9)-[histone H3] + S-adenosyl-L-homocysteine + H(+). Histone methyltransferase that specifically dimethylates histone H3 to form H3K9me2. H3K9me2 represents a specific tag for epigenetic transcriptional repression by recruiting HP1 proteins to methylated histones. Mainly functions in heterochromatin regions, thereby playing a central role in the establishment of constitutive heterochromatin at centromeric regions. The chain is Histone-lysine N-methyltransferase, H3 lysine-9 specific from Cryptococcus neoformans var. grubii serotype A (strain H99 / ATCC 208821 / CBS 10515 / FGSC 9487) (Filobasidiella neoformans var. grubii).